We begin with the raw amino-acid sequence, 641 residues long: MKIINIGILAHVDAGKTTLTESLLYSSGAIKELGSVDSGTTKTDTMFLERQRGITIQTAITSFQRENVKVNIVDTPGHMDFLADVYRSLSVLDGAILLISAKDGVQSQTRILFHALRKMNIPIIFFINKIDQNGINLPDVYQDIKDKLSDDIIIKQTVNLNLKPYVIDYTEPEQWETVIVGNDYLLEKYTIGKTLNIAELEKEENERIQSCSLYPVYHGSAKNNIGIKQLIEVITSKLFSPTQLNSDKLCGNVFKVEYSDDGQRLVYVRLYSGTLHLRDSVNISEKEKIKVTEMYTSINGELRQIDKAEPGEIIILKNELLKLNNVLGDKKRLPHREILENPLPMLQTTIEPCKSVQREKLLDALFEISDSDPLLQYYVDTVTHEIVLSFLGEVQMEVTCTLIQEKYHIEIETRKPTVIYMERPLKKSEFTIDIEVPPNPFWASIGLSVTPLPLGSGIQYESLVSLGYLNQSFQNAVMEGIRYGCEQGLYGWKLTDCKICFKYGLYYSPVSTPADFRMLAPIVLEQAFRKSGTELLEPYLSFEIYVPQEYLSRAYNDASKYCANILNTKLKGNEVILIGEIPARCIQEYRNSLTFFTNGRSVCLTELKGYQVTNIKSAFQPRRPNNRIDKVRHMFNKINLH.

The region spanning 1–242 is the tr-type G domain; it reads MKIINIGILA…VITSKLFSPT (242 aa). Residues 10 to 17, 74 to 78, and 128 to 131 contribute to the GTP site; these read AHVDAGKT, DTPGH, and NKID.

Belongs to the TRAFAC class translation factor GTPase superfamily. Classic translation factor GTPase family. TetM/TetO subfamily.

Its function is as follows. Abolishes the inhibitory effect of tetracyclin on protein synthesis by a non-covalent modification of the ribosomes. The sequence is that of Tetracycline resistance protein TetS (tetS) from Listeria monocytogenes.